The following is a 211-amino-acid chain: Redox-sensing transcriptional repressor Rex (211 aa).

Residues 17–56 (KYHRYLEELMKNEVDRISSKELGEKIGFTASQIRQDLNCF) constitute a DNA-binding region (H-T-H motif). Position 91–96 (91–96 (GAGNIG)) interacts with NAD(+).

This sequence belongs to the transcriptional regulatory Rex family. Homodimer.

The protein resides in the cytoplasm. In terms of biological role, modulates transcription in response to changes in cellular NADH/NAD(+) redox state. The chain is Redox-sensing transcriptional repressor Rex from Clostridium beijerinckii (strain ATCC 51743 / NCIMB 8052) (Clostridium acetobutylicum).